Here is a 1023-residue protein sequence, read N- to C-terminus: MNFIKENSQALIQRMGIVVIKQICDDLFALNVLNGEEVAIICSHRVEQDAARDIVHMILKKGSAACNLFLKSLENWNYPVYQDLTGHSLFHQNLEEDLDVLAQSLKDLYNSPVFKNFFPLGEDIDIIFNLQITFTEPVLWRKDHRHHRVEQMTLGSLLEALKSPCLIEGESGKGKSTLLQKIAMLWASGMCPALNQFKLVFFIRLSSARGGLFETLYDQLVNIPDSISKPTFRALLLKLHKKVLFLLDAYNEFHPQNCPEIEALVKENHRFKNMVIVTTTTECLRHIRHVGALTVEVGDMTEDSARVLIREVLINELAEGLLFQMQESRCLRNLMRTPLFVVITCAIQMGSEEFQAHTQTMLFQTFYDLLIQKNRRRHSGGTSGDFVRSLDYCGDLALEGVFSHKFDFELEDVCSMNEDVLVRTGLLCKYTAQRLRPTYKFFHKSFQEYTAGRRLSSLLKSREPEEVSKGNSYLKKMVSISDITSLYGNLLLYTCGSSTEATRAIMRHLAMVCEHGSLQGLSVTKRPLWRQESIQNLRNTTEQDVLKAINVNSFVECGINLFSESISKSELSQEFEAFFQGKSLYINSENIPDYLFDFFKYLPNCVSALDFVKLDFYGRATVSQDKTGENSSGVHTEGPSTYIPSRAVSLFFNWMQKFKTLEVTLRDISKLNKQDIKYLGKIFSSASNLKLYIKRCAAVAGRLSSVLRTCKNIHSLMVEASPLTTEDEQYITSVTDLQNLSIHDLHTQRLPGGLADSLGNLKNLLKLILDDIRLNEEDAKSLAEGLRNLKKMRLLHLTRLSDMGEGMDYIVKSLSEEPCDLQEMKLVDCCLTANSLKILAQNLHNLVKLSVLDMSENYLEKAGSEALQGLIGRLGVLEQLSALMLPWCWDAYISLPNLLKQLEGTPGLVKLGLKNWRLRDEEIRSFGEFLEMNPLRDLQQLDLAGHGVSSDGWLSFMDVFENLKQLVFFDFGTEEFLPDAALVRKLGQVLSKLTLLQEARLTGWELDDYDISVIKGTFKLVTA.

The CARD domain maps to 1–88 (MNFIKENSQA…PVYQDLTGHS (88 aa)). Residues 95 to 298 (EEDLDVLAQS…HVGALTVEVG (204 aa)) form a nucleotide-binding domain (NBD) region. Residues 163-476 (SPCLIEGESG…VSKGNSYLKK (314 aa)) enclose the NACHT domain. An ATP-binding site is contributed by 169–176 (GESGKGKS). The segment at 356-463 (AHTQTMLFQT…RLSSLLKSRE (108 aa)) is winged-helix domain (WHD). Serine 533 is subject to Phosphoserine. LRR repeat units lie at residues 578–598 (FFQG…LFDF), 655–678 (MQKF…DIKY), 734–757 (VTDL…LADS), 761–784 (LKNL…SLAE), 786–811 (LRNL…DYIV), 823–846 (EMKL…LHNL), 847–869 (VKLS…ALQG), 877–901 (LEQL…LLKQ), 910–932 (KLGL…FLEM), 935–962 (LRDL…VFEN), 964–984 (KQLV…ALVR), and 998–1020 (EARL…TFKL).

Homooligomer; homooligomerizes following activation of Naip proteins by pathogenic proteins such as S.typhimurium (Salmonella) flagellin or PrgJ. Component of the NLRC4 inflammasome, at least composed of NLRC4, caspase-1 (CASP1) and some NAIP family member. Interacts with EIF2AK2/PKR. Post-translationally, phosphorylated at Ser-533 following infection of macrophages with S.typhimurium (Salmonella). Phosphorylation is essential for NLRC4 inflammasome function to promote caspase-1 activation and pyroptosis. PRKCD phosphorylates Ser-533 in vitro.

The protein resides in the cytoplasm. The protein localises to the cytosol. Functionally, key component of inflammasomes that indirectly senses specific proteins from pathogenic bacteria and fungi and responds by assembling an inflammasome complex that promotes caspase-1 activation, cytokine production and macrophage pyroptosis. The NLRC4 inflammasome is activated as part of the innate immune response to a range of intracellular bacteria. In Rattus norvegicus (Rat), this protein is NLR family CARD domain-containing protein 4 (Nlrc4).